The sequence spans 204 residues: Methylthioribulose-1-phosphate dehydratase (204 aa).

The Zn(2+) site is built by histidine 94 and histidine 96.

This sequence belongs to the aldolase class II family. MtnB subfamily. Requires Zn(2+) as cofactor.

The catalysed reaction is 5-(methylsulfanyl)-D-ribulose 1-phosphate = 5-methylsulfanyl-2,3-dioxopentyl phosphate + H2O. It functions in the pathway amino-acid biosynthesis; L-methionine biosynthesis via salvage pathway; L-methionine from S-methyl-5-thio-alpha-D-ribose 1-phosphate: step 2/6. Catalyzes the dehydration of methylthioribulose-1-phosphate (MTRu-1-P) into 2,3-diketo-5-methylthiopentyl-1-phosphate (DK-MTP-1-P). In Cronobacter sakazakii (strain ATCC BAA-894) (Enterobacter sakazakii), this protein is Methylthioribulose-1-phosphate dehydratase.